The primary structure comprises 360 residues: Phosphate acyltransferase (360 aa).

The protein belongs to the PlsX family. As to quaternary structure, homodimer. Probably interacts with PlsY.

Its subcellular location is the cytoplasm. The enzyme catalyses a fatty acyl-[ACP] + phosphate = an acyl phosphate + holo-[ACP]. It participates in lipid metabolism; phospholipid metabolism. Functionally, catalyzes the reversible formation of acyl-phosphate (acyl-PO(4)) from acyl-[acyl-carrier-protein] (acyl-ACP). This enzyme utilizes acyl-ACP as fatty acyl donor, but not acyl-CoA. The sequence is that of Phosphate acyltransferase from Thermobifida fusca (strain YX).